The primary structure comprises 85 residues: Large ribosomal subunit protein bL27 (85 aa).

Residues Met-1–Arg-20 form a disordered region.

Belongs to the bacterial ribosomal protein bL27 family.

The chain is Large ribosomal subunit protein bL27 from Enterobacter sp. (strain 638).